We begin with the raw amino-acid sequence, 174 residues long: Large ribosomal subunit protein uL16 (174 aa).

Belongs to the universal ribosomal protein uL16 family.

In Staphylothermus marinus (strain ATCC 43588 / DSM 3639 / JCM 9404 / F1), this protein is Large ribosomal subunit protein uL16.